Reading from the N-terminus, the 265-residue chain is Large ribosomal subunit protein bL9m (265 aa).

The transit peptide at 1-49 directs the protein to the mitochondrion; that stretch reads MAASVAPGVRTLWWAGAAWLRQGGIRELFRPRIEGSTPGRDFSLSHYQS.

It belongs to the bacterial ribosomal protein bL9 family. Component of the mitochondrial ribosome large subunit (39S) which comprises a 16S rRNA and about 50 distinct proteins.

The protein localises to the mitochondrion. The chain is Large ribosomal subunit protein bL9m (Mrpl9) from Mus musculus (Mouse).